Reading from the N-terminus, the 180-residue chain is Probable chorismate pyruvate-lyase (180 aa).

Substrate-binding residues include arginine 82, leucine 120, and glutamate 165.

This sequence belongs to the UbiC family.

It localises to the cytoplasm. The catalysed reaction is chorismate = 4-hydroxybenzoate + pyruvate. Its pathway is cofactor biosynthesis; ubiquinone biosynthesis. Removes the pyruvyl group from chorismate, with concomitant aromatization of the ring, to provide 4-hydroxybenzoate (4HB) for the ubiquinone pathway. The sequence is that of Probable chorismate pyruvate-lyase from Photobacterium profundum (strain SS9).